We begin with the raw amino-acid sequence, 1546 residues long: Hybrid signal transduction histidine kinase D (1546 aa).

Positions 36-63 form a coiled coil; it reads MRKQKPDHEKTREELIEEINHLRAVSNS. Positions 65–131 constitute a PAS domain; sequence KNARIMLDEM…NIDNVREAVH (67 aa). A PAC domain is found at 139 to 193; it reads IRYETEIFGKSAGTEKITIDFSLMPLFNDKGEVSLILPEGRNITEKRLGELEIER. A Histidine kinase 1 domain is found at 218-440; the sequence is NVSHELRTPL…QFTLRLPLTP (223 aa). A Phosphohistidine; by autocatalysis modification is found at H221. One can recognise a Response regulatory 1 domain in the interval 571–686; sequence IVLVVEDNPE…ELVARVVNLM (116 aa). At D619 the chain carries 4-aspartylphosphate. The 264-residue stretch at 747 to 1010 folds into the Histidine kinase 2 domain; it reads NLSHELRTPL…QFTVVLPIIK (264 aa). A Phosphohistidine; by autocatalysis modification is found at H750. Low complexity-rich tracts occupy residues 1013 to 1031 and 1042 to 1146; these read SSSN…SPPL and NYIN…SNNN. 3 disordered regions span residues 1013-1148, 1266-1285, and 1313-1350; these read SSSN…NNEK, NNSN…PPSS, and PLSE…KANS. The span at 1313–1346 shows a compositional bias: low complexity; the sequence is PLSELKSSSNNNNNNNNNSNNNNNNSMSPNLRSP. Residues 1359–1483 form the Response regulatory 2 domain; it reads QIMLVDDLEE…ELSNSILTLI (125 aa). 4-aspartylphosphate is present on D1412. The interval 1500–1546 is disordered; the sequence is QNNNNNNNNNNNNNNNNNNNNNNINNGNDDDSLLLTDSRPCKKANSQ. Positions 1501-1526 are enriched in low complexity; sequence NNNNNNNNNNNNNNNNNNNNNNINNG.

The catalysed reaction is ATP + protein L-histidine = ADP + protein N-phospho-L-histidine.. Functionally, acts as a receptor histidine kinase for a signal transduction pathway. This protein undergoes an ATP-dependent autophosphorylation at a conserved histidine residue in the kinase core, and a phosphoryl group is then transferred to a conserved aspartate residue in the receiver domain. The polypeptide is Hybrid signal transduction histidine kinase D (dhkD) (Dictyostelium discoideum (Social amoeba)).